The chain runs to 357 residues: GTPase Obg (357 aa).

Residues 1-159 (MKFVDEAEIQ…RTLKLELKLL (159 aa)) form the Obg domain. In terms of domain architecture, OBG-type G spans 160–343 (ADIGMLGFPN…IMKSAMTLFE (184 aa)). Residues 166 to 173 (GFPNVGKS), 191 to 195 (FTTLY), 213 to 216 (DVPG), 293 to 296 (NKAD), and 324 to 326 (SAV) contribute to the GTP site. The Mg(2+) site is built by Ser-173 and Thr-193.

This sequence belongs to the TRAFAC class OBG-HflX-like GTPase superfamily. OBG GTPase family. As to quaternary structure, monomer. Mg(2+) is required as a cofactor.

It is found in the cytoplasm. An essential GTPase which binds GTP, GDP and possibly (p)ppGpp with moderate affinity, with high nucleotide exchange rates and a fairly low GTP hydrolysis rate. Plays a role in control of the cell cycle, stress response, ribosome biogenesis and in those bacteria that undergo differentiation, in morphogenesis control. The polypeptide is GTPase Obg (Xylella fastidiosa (strain M23)).